The chain runs to 1080 residues: Carbamoyl phosphate synthase large chain (1080 aa).

Residues 1 to 403 form a carboxyphosphate synthetic domain region; sequence MPKRTDLETI…SLQKALRGLE (403 aa). Residues arginine 129, arginine 169, glycine 175, glycine 176, glutamate 208, valine 210, glutamate 215, glycine 241, valine 242, histidine 243, glutamine 285, and glutamate 299 each coordinate ATP. The ATP-grasp 1 domain maps to 133-328; sequence RVAMGEIGLD…IAKVAAKLAV (196 aa). 3 residues coordinate Mg(2+): glutamine 285, glutamate 299, and asparagine 301. Glutamine 285, glutamate 299, and asparagine 301 together coordinate Mn(2+). Residues 404–554 are oligomerization domain; sequence TGKIGLDPTG…YSTYEDECEA (151 aa). Positions 555 to 942 are carbamoyl phosphate synthetic domain; it reads LPTDRDKIMI…AFARAQEAGG (388 aa). Residues 679-876 enclose the ATP-grasp 2 domain; the sequence is QQLVDKLGLK…LAKIAARCMA (198 aa). Arginine 715, arginine 754, leucine 756, glutamate 761, glycine 787, valine 788, histidine 789, serine 790, glutamine 830, and glutamate 847 together coordinate ATP. Mg(2+) is bound by residues glutamine 830, glutamate 847, and asparagine 849. Mn(2+) contacts are provided by glutamine 830, glutamate 847, and asparagine 849. Residues 943-1080 enclose the MGS-like domain; it reads IKAPPLGKAF…LQELHKELEA (138 aa). The segment at 943–1080 is allosteric domain; the sequence is IKAPPLGKAF…LQELHKELEA (138 aa).

This sequence belongs to the CarB family. In terms of assembly, composed of two chains; the small (or glutamine) chain promotes the hydrolysis of glutamine to ammonia, which is used by the large (or ammonia) chain to synthesize carbamoyl phosphate. Tetramer of heterodimers (alpha,beta)4. The cofactor is Mg(2+). It depends on Mn(2+) as a cofactor.

It catalyses the reaction hydrogencarbonate + L-glutamine + 2 ATP + H2O = carbamoyl phosphate + L-glutamate + 2 ADP + phosphate + 2 H(+). It carries out the reaction hydrogencarbonate + NH4(+) + 2 ATP = carbamoyl phosphate + 2 ADP + phosphate + 2 H(+). It functions in the pathway amino-acid biosynthesis; L-arginine biosynthesis; carbamoyl phosphate from bicarbonate: step 1/1. Its pathway is pyrimidine metabolism; UMP biosynthesis via de novo pathway; (S)-dihydroorotate from bicarbonate: step 1/3. Its function is as follows. Large subunit of the glutamine-dependent carbamoyl phosphate synthetase (CPSase). CPSase catalyzes the formation of carbamoyl phosphate from the ammonia moiety of glutamine, carbonate, and phosphate donated by ATP, constituting the first step of 2 biosynthetic pathways, one leading to arginine and/or urea and the other to pyrimidine nucleotides. The large subunit (synthetase) binds the substrates ammonia (free or transferred from glutamine from the small subunit), hydrogencarbonate and ATP and carries out an ATP-coupled ligase reaction, activating hydrogencarbonate by forming carboxy phosphate which reacts with ammonia to form carbamoyl phosphate. The chain is Carbamoyl phosphate synthase large chain from Xanthomonas axonopodis pv. citri (strain 306).